The sequence spans 106 residues: Immunoglobulin lambda constant 1 (106 aa).

In terms of domain architecture, Ig-like spans 7-101; that stretch reads PTVTLFPPSS…EGSTVEKTVA (95 aa). Cys28 and Cys87 form a disulfide bridge.

In terms of assembly, immunoglobulins are composed of two identical heavy chains and two identical light chains; disulfide-linked.

Its subcellular location is the secreted. The protein localises to the cell membrane. Constant region of immunoglobulin light chains. Immunoglobulins, also known as antibodies, are membrane-bound or secreted glycoproteins produced by B lymphocytes. In the recognition phase of humoral immunity, the membrane-bound immunoglobulins serve as receptors which, upon binding of a specific antigen, trigger the clonal expansion and differentiation of B lymphocytes into immunoglobulins-secreting plasma cells. Secreted immunoglobulins mediate the effector phase of humoral immunity, which results in the elimination of bound antigens. The antigen binding site is formed by the variable domain of one heavy chain, together with that of its associated light chain. Thus, each immunoglobulin has two antigen binding sites with remarkable affinity for a particular antigen. The variable domains are assembled by a process called V-(D)-J rearrangement and can then be subjected to somatic hypermutations which, after exposure to antigen and selection, allow affinity maturation for a particular antigen. The chain is Immunoglobulin lambda constant 1 from Homo sapiens (Human).